A 520-amino-acid polypeptide reads, in one-letter code: DnaJ homolog l(2)tid, mitochondrial (520 aa).

The transit peptide at Met1 to Leu62 directs the protein to the mitochondrion. Arg30 bears the Omega-N-methylarginine mark. A J domain is found at Asp65–Gly130. Lys106 carries the N6-acetyllysine modification. The CR-type zinc finger occupies Gly214–Arg292. Positions 227, 230, 244, 247, 266, 269, 280, and 283 each coordinate Zn(2+). The stretch at Cys227 to Lys234 is one CXXCXGXG motif; approximate repeat. A CXXCXGXG motif repeat occupies Cys244–Gly251. The CXXCXGXG motif; approximate repeat unit spans residues Cys266–Arg273. The CXXCXGXG motif repeat unit spans residues Cys280–Gly287. Positions Gln430 to Asn520 are disordered. Residues Ala446–Ala476 are compositionally biased toward low complexity. The span at Ser479–Glu495 shows a compositional bias: basic and acidic residues. Gly residues predominate over residues Gly496 to Phe511.

In terms of assembly, interacts with ptc (via C-terminal cytoplasmic region); the interaction is probably direct. Interacts with hh/hedgehog; the interaction is probably mediated by the hedgehog receptor ptc. Post-translationally, appears to produce proteins of differing size. Predicted to have a molecular mass of 56 kDa (TID56) however proteins of 50 kDa, 47 kDa and 40 kDa have been identified and named TID50, TID47 and TID40. TID50 and TID40 localize to the mitochondria while TID47 localizes to the cytoplasm. TID50 is probably TID56 that has undergone mitochondrial transit peptide processing. TID40 and TID47 may be alternately processed proteins or may be isoforms resulting from alternative splicing. In terms of tissue distribution, ubiquitously expressed throughout embryonic development. In larvae, expression is seen in sensory organs, gopplet cells, gonads, imaginal disks, proventriculus, fat body, hematopoietic organ, midgut, Malpighian tubules and ring gland.

It localises to the cytoplasm. Its subcellular location is the cytosol. It is found in the mitochondrion. The protein resides in the mitochondrion outer membrane. Its function is as follows. Involved in hh/hedgehog signaling. May act as a tumor suppressor in larval imaginal disks. This Drosophila melanogaster (Fruit fly) protein is DnaJ homolog l(2)tid, mitochondrial.